The primary structure comprises 171 residues: Shikimate kinase (171 aa).

Residue Gly-14–Thr-19 participates in ATP binding. Residue Ser-18 participates in Mg(2+) binding. Substrate is bound by residues Asp-36, Arg-60, and Gly-82. Arg-120 provides a ligand contact to ATP. Substrate is bound at residue Arg-139. Gln-156 is an ATP binding site.

It belongs to the shikimate kinase family. Monomer. Mg(2+) serves as cofactor.

Its subcellular location is the cytoplasm. It carries out the reaction shikimate + ATP = 3-phosphoshikimate + ADP + H(+). The protein operates within metabolic intermediate biosynthesis; chorismate biosynthesis; chorismate from D-erythrose 4-phosphate and phosphoenolpyruvate: step 5/7. Catalyzes the specific phosphorylation of the 3-hydroxyl group of shikimic acid using ATP as a cosubstrate. In Shewanella woodyi (strain ATCC 51908 / MS32), this protein is Shikimate kinase.